Here is a 298-residue protein sequence, read N- to C-terminus: Small ribosomal subunit protein uS2 (298 aa).

Residues 272 to 298 (EGGDWAASSAAPAGESWAEAQPTEAKW) form a disordered region.

The protein belongs to the universal ribosomal protein uS2 family. In terms of assembly, component of the small ribosomal subunit. Mature ribosomes consist of a small (40S) and a large (60S) subunit. The 40S subunit contains about 33 different proteins and 1 molecule of RNA (18S). The 60S subunit contains about 49 different proteins and 3 molecules of RNA (25S, 5.8S and 5S). Interacts with rps21.

The protein resides in the cytoplasm. Required for the assembly and/or stability of the 40S ribosomal subunit. Required for the processing of the 20S rRNA-precursor to mature 18S rRNA in a late step of the maturation of 40S ribosomal subunits. The chain is Small ribosomal subunit protein uS2 (rps0) from Aspergillus niger (strain ATCC MYA-4892 / CBS 513.88 / FGSC A1513).